We begin with the raw amino-acid sequence, 814 residues long: DNA ligase (814 aa).

Residues 46-50 (DAEYD), 95-96 (SL), and glutamate 129 contribute to the NAD(+) site. Lysine 131 (N6-AMP-lysine intermediate) is an active-site residue. NAD(+) is bound by residues arginine 152, glutamate 189, lysine 305, and lysine 329. Positions 434, 437, 458, and 464 each coordinate Zn(2+). The tract at residues 526–549 (SAQRRTEGEPAPKKPTKKKGEEED) is disordered. The BRCT domain occupies 735-814 (TSAAAFAGKT…DDWLAMLAEA (80 aa)).

It belongs to the NAD-dependent DNA ligase family. LigA subfamily. Mg(2+) serves as cofactor. The cofactor is Mn(2+).

It catalyses the reaction NAD(+) + (deoxyribonucleotide)n-3'-hydroxyl + 5'-phospho-(deoxyribonucleotide)m = (deoxyribonucleotide)n+m + AMP + beta-nicotinamide D-nucleotide.. In terms of biological role, DNA ligase that catalyzes the formation of phosphodiester linkages between 5'-phosphoryl and 3'-hydroxyl groups in double-stranded DNA using NAD as a coenzyme and as the energy source for the reaction. It is essential for DNA replication and repair of damaged DNA. The sequence is that of DNA ligase from Methylorubrum extorquens (strain CM4 / NCIMB 13688) (Methylobacterium extorquens).